A 393-amino-acid polypeptide reads, in one-letter code: Acetyl-CoA acetyltransferase (393 aa).

Residue Cys-88 is the Acyl-thioester intermediate of the active site. Residues His-349 and Cys-379 each act as proton acceptor in the active site.

This sequence belongs to the thiolase-like superfamily. Thiolase family. Homotetramer.

It is found in the cytoplasm. It carries out the reaction 2 acetyl-CoA = acetoacetyl-CoA + CoA. The protein operates within biopolymer metabolism; poly-(R)-3-hydroxybutanoate biosynthesis. The condensation reaction is inhibited by free CoA. The cleavage reaction is characterized by substrate inhibition by acetoacetyl-CoA, which is partially relieved by free CoA. Functionally, catalyzes the condensation of two acetyl-coA units to form acetoacetyl-CoA. Is involved in the biosynthesis of polyhydroxybutyrate (PHB), which is accumulated as an intracellular energy reserve material when cells grow under conditions of nutrient limitation. Also catalyzes the reverse reaction, i.e. the cleavage of acetoacetyl-CoA, and is therefore also involved in the reutilization of PHB. The chain is Acetyl-CoA acetyltransferase from Cupriavidus necator (strain ATCC 17699 / DSM 428 / KCTC 22496 / NCIMB 10442 / H16 / Stanier 337) (Ralstonia eutropha).